We begin with the raw amino-acid sequence, 2448 residues long: Cysteine repeat modular protein 1 (2448 aa).

Residues 9 to 29 traverse the membrane as a helical segment; sequence TSTNLLNIFALYFSAICFIYC. N-linked (GlcNAc...) asparagine glycans are attached at residues asparagine 48, asparagine 89, asparagine 248, asparagine 284, asparagine 461, asparagine 503, asparagine 542, asparagine 598, and asparagine 619. 4 FU repeats span residues 431–481, 485–530, 535–566, and 567–611; these read KNTC…GYYF, FMQC…GFYI, NFKC…FYLS, and SNTC…GQFA. FU repeat units follow at residues 645 to 694, 698 to 727, 728 to 772, 775 to 813, 819 to 868, 904 to 947, 950 to 983, 984 to 1027, 1063 to 1109, and 1113 to 1144; these read NNQC…GYFP, TSVC…YYLQ, DSNC…GTFG, QNIC…ITNN, KGMC…YYLS, GRVC…GFPD, QNVC…LNPA, NNIC…RTYP, QGAC…NQYV, and QNRC…GFYL. N-linked (GlcNAc...) asparagine glycans are attached at residues asparagine 761 and asparagine 812. The N-linked (GlcNAc...) asparagine glycan is linked to asparagine 934. N-linked (GlcNAc...) asparagine glycosylation occurs at asparagine 1002. A glycan (N-linked (GlcNAc...) asparagine) is linked at asparagine 1146. The stretch at 1147 to 1193 is one FU 15 repeat; it reads QTQCSICDISCLQCSGPGFDSCIQCAQGYYKLGDSVCVQSCPDGFFL. Asparagine 1194 is a glycosylation site (N-linked (GlcNAc...) asparagine). FU repeat units follow at residues 1197 to 1232, 1234 to 1279, 1281 to 1332, 1346 to 1394, and 1402 to 1436; these read NNQC…ISNQ, GIIC…GYRS, KGVC…GTFQ, SYYC…GFIL, and NQYC…GTVQ. N-linked (GlcNAc...) asparagine glycans are attached at residues asparagine 1296, asparagine 1328, and asparagine 1365. N-linked (GlcNAc...) asparagine glycosylation is found at asparagine 1506, asparagine 1601, asparagine 1628, and asparagine 1670. The region spanning 1739 to 1773 is the EGF-like domain; it reads SDISCSLNLCMNSGKCVPNSIFCSCPSAFTGPKCQ. Cystine bridges form between cysteine 1743–cysteine 1754, cysteine 1748–cysteine 1761, and cysteine 1763–cysteine 1772. N-linked (GlcNAc...) asparagine glycans are attached at residues asparagine 1800, asparagine 1849, asparagine 1877, asparagine 1942, asparagine 2117, asparagine 2155, and asparagine 2179. Transmembrane regions (helical) follow at residues 2201–2221 and 2238–2258; these read LYIM…YSAI and IYFL…NQFV. Asparagine 2260 carries N-linked (GlcNAc...) asparagine glycosylation. 4 helical membrane passes run 2267 to 2287, 2296 to 2316, 2352 to 2372, and 2386 to 2406; these read SLTI…ILPF, ILTS…TIGV, MIGL…IGLC, and AVFL…IIVG.

The protein resides in the membrane. Functionally, required for mucocyst secretion. The protein is Cysteine repeat modular protein 1 of Tetrahymena thermophila (strain SB210).